The chain runs to 69 residues: Large ribosomal subunit protein bL32c (69 aa).

It belongs to the bacterial ribosomal protein bL32 family.

It localises to the plastid. The protein localises to the chloroplast. This chain is Large ribosomal subunit protein bL32c (rpl32), found in Marchantia polymorpha (Common liverwort).